The primary structure comprises 319 residues: Cytochrome c biogenesis protein CcsA (319 aa).

The next 7 membrane-spanning stretches (helical) occupy residues 9–29 (ILTH…LITL), 44–64 (GVIG…AYSG), 71–91 (LYES…FPYL), 143–163 (MVLG…LLVI), 225–245 (IISL…VWAN), 259–273 (TWAF…IYLH), and 286–306 (AIVA…VNLL).

It belongs to the CcmF/CycK/Ccl1/NrfE/CcsA family. As to quaternary structure, may interact with Ccs1.

The protein localises to the plastid. It localises to the chloroplast thylakoid membrane. Its function is as follows. Required during biogenesis of c-type cytochromes (cytochrome c6 and cytochrome f) at the step of heme attachment. The sequence is that of Cytochrome c biogenesis protein CcsA from Oenothera argillicola (Appalachian evening primrose).